The primary structure comprises 85 residues: Large ribosomal subunit protein bL27 (85 aa).

Residues 1 to 21 form a disordered region; it reads MAHKKAGGSTRNGRDSESKRL.

The protein belongs to the bacterial ribosomal protein bL27 family.

In Photorhabdus laumondii subsp. laumondii (strain DSM 15139 / CIP 105565 / TT01) (Photorhabdus luminescens subsp. laumondii), this protein is Large ribosomal subunit protein bL27.